The following is a 424-amino-acid chain: Imidazolonepropionase (424 aa).

H85 and H87 together coordinate Fe(3+). Zn(2+) is bound by residues H85 and H87. 4-imidazolone-5-propanoate contacts are provided by R94, Y157, and H190. Y157 lines the N-formimidoyl-L-glutamate pocket. H255 contacts Fe(3+). H255 provides a ligand contact to Zn(2+). E258 contributes to the 4-imidazolone-5-propanoate binding site. D329 serves as a coordination point for Fe(3+). D329 lines the Zn(2+) pocket. N-formimidoyl-L-glutamate contacts are provided by N331 and G333. A 4-imidazolone-5-propanoate-binding site is contributed by S334.

The protein belongs to the metallo-dependent hydrolases superfamily. HutI family. Requires Zn(2+) as cofactor. It depends on Fe(3+) as a cofactor.

It is found in the cytoplasm. It carries out the reaction 4-imidazolone-5-propanoate + H2O = N-formimidoyl-L-glutamate. Its pathway is amino-acid degradation; L-histidine degradation into L-glutamate; N-formimidoyl-L-glutamate from L-histidine: step 3/3. Its function is as follows. Catalyzes the hydrolytic cleavage of the carbon-nitrogen bond in imidazolone-5-propanoate to yield N-formimidoyl-L-glutamate. It is the third step in the universal histidine degradation pathway. The chain is Imidazolonepropionase from Brevibacillus brevis (strain 47 / JCM 6285 / NBRC 100599).